The chain runs to 213 residues: Redox-sensing transcriptional repressor Rex (213 aa).

The segment at residues 17-56 (LYYRIFKRFHSENIEKASSKQIAEAIGIDSATVRRDFSYF) is a DNA-binding region (H-T-H motif). An NAD(+)-binding site is contributed by 91 to 96 (GVGNIG).

This sequence belongs to the transcriptional regulatory Rex family. In terms of assembly, homodimer.

The protein localises to the cytoplasm. In terms of biological role, modulates transcription in response to changes in cellular NADH/NAD(+) redox state. The polypeptide is Redox-sensing transcriptional repressor Rex (Streptococcus mutans serotype c (strain ATCC 700610 / UA159)).